Here is a 352-residue protein sequence, read N- to C-terminus: UDP-3-O-acylglucosamine N-acyltransferase (352 aa).

Residue His257 is the Proton acceptor of the active site.

This sequence belongs to the transferase hexapeptide repeat family. LpxD subfamily. In terms of assembly, homotrimer.

The enzyme catalyses a UDP-3-O-[(3R)-3-hydroxyacyl]-alpha-D-glucosamine + a (3R)-hydroxyacyl-[ACP] = a UDP-2-N,3-O-bis[(3R)-3-hydroxyacyl]-alpha-D-glucosamine + holo-[ACP] + H(+). The protein operates within bacterial outer membrane biogenesis; LPS lipid A biosynthesis. In terms of biological role, catalyzes the N-acylation of UDP-3-O-acylglucosamine using 3-hydroxyacyl-ACP as the acyl donor. Is involved in the biosynthesis of lipid A, a phosphorylated glycolipid that anchors the lipopolysaccharide to the outer membrane of the cell. This Methylobacterium nodulans (strain LMG 21967 / CNCM I-2342 / ORS 2060) protein is UDP-3-O-acylglucosamine N-acyltransferase.